Consider the following 93-residue polypeptide: uncharacterized protein (93 aa).

This is an uncharacterized protein from Saimiriine herpesvirus 2 (strain 11) (SaHV-2).